The sequence spans 335 residues: Large ribosomal subunit protein uL10 (335 aa).

The segment at 304-335 (GAAAPVEEAPVEEKKEEKKEEAAPAAGLGMLF) is disordered. Over residues 314 to 325 (VEEKKEEKKEEA) the composition is skewed to basic and acidic residues.

This sequence belongs to the universal ribosomal protein uL10 family. As to quaternary structure, part of the 50S ribosomal subunit. Forms part of the ribosomal stalk which helps the ribosome interact with GTP-bound translation factors. Forms a heptameric L10(L12)2(L12)2(L12)2 complex, where L10 forms an elongated spine to which the L12 dimers bind in a sequential fashion.

Its function is as follows. Forms part of the ribosomal stalk, playing a central role in the interaction of the ribosome with GTP-bound translation factors. This is Large ribosomal subunit protein uL10 from Methanococcus maripaludis (strain C6 / ATCC BAA-1332).